Consider the following 449-residue polypeptide: Putative F-box/FBD/LRR-repeat protein At5g62970 (449 aa).

Positions 2–50 (DKISGFSDDELLVKILSFLPFKFAITTSVLSKQWKFLWMRVPKLEYDED) constitute an F-box domain. 6 LRR repeats span residues 27-52 (TTSV…EDSM), 81-107 (GHRM…RLKF), 158-185 (TLKL…HLER), 186-211 (VTYG…VVEL), 252-279 (YFKL…NITA), and 328-354 (IHNA…EFDE). Residues 368-418 (FWNQPNSVPQCLLSTLQTFEWSGYPGSVQGKDLATYILRKSRQLKIATISI) form the FBD domain.

This chain is Putative F-box/FBD/LRR-repeat protein At5g62970, found in Arabidopsis thaliana (Mouse-ear cress).